The sequence spans 1503 residues: EF-hand calcium-binding domain-containing protein 5 (1503 aa).

The interval 1 to 23 (MNESASQEELRPAQENRKEDKER) is disordered. Basic and acidic residues predominate over residues 8–23 (EELRPAQENRKEDKER). The residue at position 77 (serine 77) is a Phosphoserine. 3 disordered regions span residues 477-518 (ASKT…EQGP), 544-656 (IEPG…QGPY), and 730-750 (FPETTKKEVQKDKPCEPKSQK). Positions 549–561 (HTESTLEQGSSRR) are enriched in polar residues. 2 stretches are compositionally biased toward basic and acidic residues: residues 562 to 582 (LLTEQETHRESTTEQGQHKGS) and 607 to 622 (GSRRESIAEQDRHKGS). In terms of domain architecture, EF-hand spans 869–904 (RQRLLLEAIFQKWDSDGSGFLDLKEVDELLYTYKEG). Ca(2+) is bound by residues aspartate 882, aspartate 884, serine 886, and glutamate 893.

This Homo sapiens (Human) protein is EF-hand calcium-binding domain-containing protein 5 (EFCAB5).